The chain runs to 388 residues: Methylthioribose-1-phosphate isomerase (388 aa).

The Proton donor role is filled by Asp-252.

The protein belongs to the eIF-2B alpha/beta/delta subunits family. MtnA subfamily.

Its subcellular location is the cytoplasm. The protein localises to the nucleus. It carries out the reaction 5-(methylsulfanyl)-alpha-D-ribose 1-phosphate = 5-(methylsulfanyl)-D-ribulose 1-phosphate. The protein operates within amino-acid biosynthesis; L-methionine biosynthesis via salvage pathway; L-methionine from S-methyl-5-thio-alpha-D-ribose 1-phosphate: step 1/6. Functionally, catalyzes the interconversion of methylthioribose-1-phosphate (MTR-1-P) into methylthioribulose-1-phosphate (MTRu-1-P). The sequence is that of Methylthioribose-1-phosphate isomerase from Verticillium alfalfae (strain VaMs.102 / ATCC MYA-4576 / FGSC 10136) (Verticillium wilt of alfalfa).